Consider the following 556-residue polypeptide: Membrane protein insertase YidC (556 aa).

Transmembrane regions (helical) follow at residues 6 to 26 (IVLY…WQID), 332 to 352 (LDLT…FSLM), 358 to 378 (VVGN…LAFY), 428 to 448 (LGGC…YWVL), and 501 to 521 (VMMF…SGLV).

Belongs to the OXA1/ALB3/YidC family. Type 1 subfamily. In terms of assembly, interacts with the Sec translocase complex via SecD. Specifically interacts with transmembrane segments of nascent integral membrane proteins during membrane integration.

The protein localises to the cell inner membrane. Required for the insertion and/or proper folding and/or complex formation of integral membrane proteins into the membrane. Involved in integration of membrane proteins that insert both dependently and independently of the Sec translocase complex, as well as at least some lipoproteins. Aids folding of multispanning membrane proteins. This is Membrane protein insertase YidC from Legionella pneumophila (strain Corby).